Reading from the N-terminus, the 255-residue chain is Acetylglutamate kinase (255 aa).

Substrate contacts are provided by residues 40–41 (GG), R62, and N153.

It belongs to the acetylglutamate kinase family. ArgB subfamily.

It localises to the cytoplasm. The enzyme catalyses N-acetyl-L-glutamate + ATP = N-acetyl-L-glutamyl 5-phosphate + ADP. It functions in the pathway amino-acid biosynthesis; L-arginine biosynthesis; N(2)-acetyl-L-ornithine from L-glutamate: step 2/4. Its function is as follows. Catalyzes the ATP-dependent phosphorylation of N-acetyl-L-glutamate. The sequence is that of Acetylglutamate kinase from Bacillus cereus (strain ATCC 14579 / DSM 31 / CCUG 7414 / JCM 2152 / NBRC 15305 / NCIMB 9373 / NCTC 2599 / NRRL B-3711).